Reading from the N-terminus, the 113-residue chain is Cell cycle protein GpsB (113 aa).

A coiled-coil region spans residues 37-63 (KDYETYATLVKSLRQEIADLKEELTRK). Positions 61-82 (TRKPQVSSAPSPSHPDPIDVAA) are disordered.

Belongs to the GpsB family. In terms of assembly, forms polymers through the coiled coil domains. Interacts with PBP1, MreC and EzrA.

It is found in the cytoplasm. In terms of biological role, divisome component that associates with the complex late in its assembly, after the Z-ring is formed, and is dependent on DivIC and PBP2B for its recruitment to the divisome. Together with EzrA, is a key component of the system that regulates PBP1 localization during cell cycle progression. Its main role could be the removal of PBP1 from the cell pole after pole maturation is completed. Also contributes to the recruitment of PBP1 to the division complex. Not essential for septum formation. This is Cell cycle protein GpsB from Streptococcus pneumoniae (strain ATCC 700669 / Spain 23F-1).